A 113-amino-acid polypeptide reads, in one-letter code: Large ribosomal subunit protein uL22 (113 aa).

This sequence belongs to the universal ribosomal protein uL22 family. In terms of assembly, part of the 50S ribosomal subunit.

In terms of biological role, this protein binds specifically to 23S rRNA; its binding is stimulated by other ribosomal proteins, e.g. L4, L17, and L20. It is important during the early stages of 50S assembly. It makes multiple contacts with different domains of the 23S rRNA in the assembled 50S subunit and ribosome. Its function is as follows. The globular domain of the protein is located near the polypeptide exit tunnel on the outside of the subunit, while an extended beta-hairpin is found that lines the wall of the exit tunnel in the center of the 70S ribosome. This Halothermothrix orenii (strain H 168 / OCM 544 / DSM 9562) protein is Large ribosomal subunit protein uL22.